Consider the following 352-residue polypeptide: Peptide chain release factor 1 (352 aa).

Gln229 carries the post-translational modification N5-methylglutamine.

Belongs to the prokaryotic/mitochondrial release factor family. Post-translationally, methylated by PrmC. Methylation increases the termination efficiency of RF1.

The protein localises to the cytoplasm. Its function is as follows. Peptide chain release factor 1 directs the termination of translation in response to the peptide chain termination codons UAG and UAA. In Granulibacter bethesdensis (strain ATCC BAA-1260 / CGDNIH1), this protein is Peptide chain release factor 1.